Reading from the N-terminus, the 82-residue chain is Cytochrome c-551 (82 aa).

Residues cysteine 12, cysteine 15, histidine 16, and methionine 61 each coordinate heme c.

Binds 1 heme c group covalently per subunit.

This is a prokaryotic monoheme cytochrome, unreactive with mitochondrial cytochrome C oxidase or reductase. It functions in nitrite and nitrate respiration in Pseudomonas, but it is also found in other bacteria. The sequence is that of Cytochrome c-551 from Ectopseudomonas mendocina (Pseudomonas mendocina).